The primary structure comprises 194 residues: Leucyl/phenylalanyl-tRNA--protein transferase (194 aa).

The protein belongs to the L/F-transferase family.

Its subcellular location is the cytoplasm. It carries out the reaction N-terminal L-lysyl-[protein] + L-leucyl-tRNA(Leu) = N-terminal L-leucyl-L-lysyl-[protein] + tRNA(Leu) + H(+). The catalysed reaction is N-terminal L-arginyl-[protein] + L-leucyl-tRNA(Leu) = N-terminal L-leucyl-L-arginyl-[protein] + tRNA(Leu) + H(+). It catalyses the reaction L-phenylalanyl-tRNA(Phe) + an N-terminal L-alpha-aminoacyl-[protein] = an N-terminal L-phenylalanyl-L-alpha-aminoacyl-[protein] + tRNA(Phe). Its function is as follows. Functions in the N-end rule pathway of protein degradation where it conjugates Leu, Phe and, less efficiently, Met from aminoacyl-tRNAs to the N-termini of proteins containing an N-terminal arginine or lysine. The protein is Leucyl/phenylalanyl-tRNA--protein transferase of Prosthecochloris aestuarii (strain DSM 271 / SK 413).